We begin with the raw amino-acid sequence, 574 residues long: Septation ring formation regulator EzrA (574 aa).

The Extracellular segment spans residues 1–7; it reads MSNGLII. The chain crosses the membrane as a helical span at residues 8–26; the sequence is LIIVIAVALILAYVAAVVL. Over 27 to 574 the chain is Cytoplasmic; the sequence is RKRNETLLDS…YEKTRENIRF (548 aa). Coiled coils occupy residues 104-141, 267-424, and 456-524; these read LKAK…EAKN, NITQ…QKVN, and ASDH…SIQE.

It belongs to the EzrA family.

It is found in the cell membrane. Negative regulator of FtsZ ring formation; modulates the frequency and position of FtsZ ring formation. Inhibits FtsZ ring formation at polar sites. Interacts either with FtsZ or with one of its binding partners to promote depolymerization. This chain is Septation ring formation regulator EzrA, found in Streptococcus gordonii (strain Challis / ATCC 35105 / BCRC 15272 / CH1 / DL1 / V288).